The following is a 182-amino-acid chain: Inner membrane-spanning protein YciB (182 aa).

The next 5 helical transmembrane spans lie at 22 to 42 (IYAATGALMATTLLQMIVVWV), 53 to 73 (ITLVLVLGFGAMTLFFHNEAF), 76 to 96 (WKVTVLYAAFGSALWISQFLF), 121 to 141 (FSWGLFFWMVGALNVYIAFYL), and 149 to 169 (FKVFGVLGLMLVSTLLTGIYI).

It belongs to the YciB family.

It is found in the cell inner membrane. In terms of biological role, plays a role in cell envelope biogenesis, maintenance of cell envelope integrity and membrane homeostasis. In Tolumonas auensis (strain DSM 9187 / NBRC 110442 / TA 4), this protein is Inner membrane-spanning protein YciB.